Here is a 466-residue protein sequence, read N- to C-terminus: Glutamate--tRNA ligase (466 aa).

The short motif at 11–21 (PSPTGFIHLGN) is the 'HIGH' region element. Positions 243-247 (KMSKR) match the 'KMSKS' region motif. Lys-246 contacts ATP.

Belongs to the class-I aminoacyl-tRNA synthetase family. Glutamate--tRNA ligase type 1 subfamily. As to quaternary structure, monomer.

The protein resides in the cytoplasm. It carries out the reaction tRNA(Glu) + L-glutamate + ATP = L-glutamyl-tRNA(Glu) + AMP + diphosphate. Catalyzes the attachment of glutamate to tRNA(Glu) in a two-step reaction: glutamate is first activated by ATP to form Glu-AMP and then transferred to the acceptor end of tRNA(Glu). The protein is Glutamate--tRNA ligase of Cupriavidus necator (strain ATCC 17699 / DSM 428 / KCTC 22496 / NCIMB 10442 / H16 / Stanier 337) (Ralstonia eutropha).